The following is a 428-amino-acid chain: 3-phosphoshikimate 1-carboxyvinyltransferase (428 aa).

The 3-phosphoshikimate site is built by Lys22, Ser23, and Arg27. Lys22 is a binding site for phosphoenolpyruvate. Phosphoenolpyruvate is bound by residues Gly96 and Arg124. 3-phosphoshikimate contacts are provided by Ser169, Ser170, Gln171, Ser197, Asp313, Asn336, and Lys340. Gln171 contacts phosphoenolpyruvate. Catalysis depends on Asp313, which acts as the Proton acceptor. Phosphoenolpyruvate is bound by residues Arg344, Arg386, and Lys411.

It belongs to the EPSP synthase family. In terms of assembly, monomer.

The protein resides in the cytoplasm. It carries out the reaction 3-phosphoshikimate + phosphoenolpyruvate = 5-O-(1-carboxyvinyl)-3-phosphoshikimate + phosphate. The protein operates within metabolic intermediate biosynthesis; chorismate biosynthesis; chorismate from D-erythrose 4-phosphate and phosphoenolpyruvate: step 6/7. Its function is as follows. Catalyzes the transfer of the enolpyruvyl moiety of phosphoenolpyruvate (PEP) to the 5-hydroxyl of shikimate-3-phosphate (S3P) to produce enolpyruvyl shikimate-3-phosphate and inorganic phosphate. This chain is 3-phosphoshikimate 1-carboxyvinyltransferase, found in Xenorhabdus nematophila (strain ATCC 19061 / DSM 3370 / CCUG 14189 / LMG 1036 / NCIMB 9965 / AN6).